Consider the following 481-residue polypeptide: Protein JASON (481 aa).

The disordered stretch occupies residues 226–250; sequence ECDLDQSNSSNSSENGSSRKPEMGG. Positions 232 to 241 are enriched in low complexity; sequence SNSSNSSENG.

Functionally, required for normal spindle orientation at male meiosis II and normal formation of tetrad of microspores. Acts as a positive regulator of PS1 in male sporogenesis. Not involved in female meiosis. The protein is Protein JASON of Arabidopsis thaliana (Mouse-ear cress).